The following is a 31-amino-acid chain: GTVPCGESCVFIPCITGIAGCSCKNKVCYID.

Residues 1–31 constitute a cross-link (cyclopeptide (Gly-Asp)); that stretch reads GTVPCGESCVFIPCITGIAGCSCKNKVCYID. Intrachain disulfides connect C5–C21, C9–C23, and C14–C28.

In terms of processing, contains 3 disulfide bonds. This is a cyclic peptide.

Its function is as follows. Probably participates in a plant defense mechanism. The sequence is that of Cyclotide cter-J from Clitoria ternatea (Butterfly pea).